Consider the following 151-residue polypeptide: MNKTPLPNLETLEQKWYVIDAADQRLGRLATEIAMILRGKNKATFTPHLDTGDFVIVINAEKVTVTGKKRQQKVYRRDSGRPGGMKVESFDKLQKRIPERIIEHAVKGMLPKNSLGRKLFTKLKVYAGAEHPHQAQQPEVLAINTIPAGGN.

It belongs to the universal ribosomal protein uL13 family. As to quaternary structure, part of the 50S ribosomal subunit.

Its function is as follows. This protein is one of the early assembly proteins of the 50S ribosomal subunit, although it is not seen to bind rRNA by itself. It is important during the early stages of 50S assembly. The polypeptide is Large ribosomal subunit protein uL13 (Microcystis aeruginosa (strain NIES-843 / IAM M-2473)).